Reading from the N-terminus, the 131-residue chain is MSWQAYVDDHLMCEIDGNHLTAAAIVGHDGSVWAQSPNFPQYKPEEITGIMKDFDEPGSLAPTGLFLGGTKYMVIQGEPGVVIRGKKGTGGICVKKTGLSLILGIYDEPMTPGQCNMIVERLGDYLIEQGC.

The protein belongs to the profilin family. In terms of assembly, occurs in many kinds of cells as a complex with monomeric actin in a 1:1 ratio.

The protein localises to the cytoplasm. The protein resides in the cytoskeleton. In terms of biological role, binds to actin and affects the structure of the cytoskeleton. At high concentrations, profilin prevents the polymerization of actin, whereas it enhances it at low concentrations. By binding to PIP2, it inhibits the formation of IP3 and DG. This Oryza sativa subsp. indica (Rice) protein is Profilin LP04.